The following is a 1139-amino-acid chain: Protein kinase C-like (1139 aa).

Positions 1-67 (MNEDEAIQNI…LRDIQLRKVG (67 aa)) constitute an REM-1 1 domain. Residues 72-132 (GMSLGADDAG…PGPGAASKAR (61 aa)) are disordered. The 78-residue stretch at 142-219 (KYDTPYLGPR…LKRYEELHVD (78 aa)) folds into the REM-1 2 domain. One can recognise a C2 domain in the interval 225–343 (AQDDDSINTP…MRRKRIEAEM (119 aa)). A disordered region spans residues 349 to 404 (VSADRMGSTGAPSQFPMSPTSGSFGGSPQAPGGGQGQAPGPFGDPAPQPQVVTGPI). Residues 358-368 (GAPSQFPMSPT) are compositionally biased toward polar residues. 2 consecutive Phorbol-ester/DAG-type zinc fingers follow at residues 454-502 (GHKF…VTKC) and 522-572 (PHRF…PDFC). Disordered stretches follow at residues 590–637 (KQRQ…TPSA), 649–668 (QTSPQRPGQPGRAPSDLSAA), and 679–804 (QGRT…TDPG). The span at 594–614 (QKTTSLSEKTLRSGATKSPTT) shows a compositional bias: polar residues. Residues 615-629 (AGHGSSASFSSAGAG) show a composition bias toward low complexity. 2 stretches are compositionally biased toward pro residues: residues 723-734 (AQPPAQQRPPQP) and 743-760 (AQMPPQQPPPQQPLPPQP). The span at 761 to 793 (GQQYQQQQPAAQKPQPQPPATAQGAAAGPPGSQ) shows a compositional bias: low complexity. The region spanning 814–1073 (FNFLAVLGKG…AQEVMSQPFF (260 aa)) is the Protein kinase domain. Residues 820 to 828 (LGKGNFGKV) and Lys-843 contribute to the ATP site. Residue Asp-939 is the Proton acceptor of the active site. One can recognise an AGC-kinase C-terminal domain in the interval 1074-1139 (RNINWDDIYH…RGFSYTADLD (66 aa)).

This sequence belongs to the protein kinase superfamily. AGC Ser/Thr protein kinase family. PKC subfamily.

It carries out the reaction L-seryl-[protein] + ATP = O-phospho-L-seryl-[protein] + ADP + H(+). The enzyme catalyses L-threonyl-[protein] + ATP = O-phospho-L-threonyl-[protein] + ADP + H(+). With respect to regulation, stimulated about twofold by phospholipids or phorbol esters. The polypeptide is Protein kinase C-like (pkc1) (Hypocrea jecorina (Trichoderma reesei)).